Here is a 161-residue protein sequence, read N- to C-terminus: ATP synthase subunit b 1 (161 aa).

Residues Glu5–Phe25 traverse the membrane as a helical segment.

It belongs to the ATPase B chain family. F-type ATPases have 2 components, F(1) - the catalytic core - and F(0) - the membrane proton channel. F(1) has five subunits: alpha(3), beta(3), gamma(1), delta(1), epsilon(1). F(0) has three main subunits: a(1), b(2) and c(10-14). The alpha and beta chains form an alternating ring which encloses part of the gamma chain. F(1) is attached to F(0) by a central stalk formed by the gamma and epsilon chains, while a peripheral stalk is formed by the delta and b chains.

Its subcellular location is the cell inner membrane. Functionally, f(1)F(0) ATP synthase produces ATP from ADP in the presence of a proton or sodium gradient. F-type ATPases consist of two structural domains, F(1) containing the extramembraneous catalytic core and F(0) containing the membrane proton channel, linked together by a central stalk and a peripheral stalk. During catalysis, ATP synthesis in the catalytic domain of F(1) is coupled via a rotary mechanism of the central stalk subunits to proton translocation. In terms of biological role, component of the F(0) channel, it forms part of the peripheral stalk, linking F(1) to F(0). This chain is ATP synthase subunit b 1, found in Methylobacterium sp. (strain 4-46).